The sequence spans 276 residues: ATP synthase subunit a 2 (276 aa).

Transmembrane regions (helical) follow at residues 45–65 (AVHVDSLGWSIALGALFVWLF), 105–125 (VIAPLALTVFCWIFLMNLMDL), 154–173 (VNVTLGMSLSVFFLIIYYSI), 226–246 (LLFILIALMPFWAQWALSVPW), and 247–267 (AIFHILVIVLQAFIFMMLTIV).

The protein belongs to the ATPase A chain family. As to quaternary structure, F-type ATPases have 2 components, CF(1) - the catalytic core - and CF(0) - the membrane proton channel. CF(1) has five subunits: alpha(3), beta(3), gamma(1), delta(1), epsilon(1). CF(0) has three main subunits: a(1), b(2) and c(9-12). The alpha and beta chains form an alternating ring which encloses part of the gamma chain. CF(1) is attached to CF(0) by a central stalk formed by the gamma and epsilon chains, while a peripheral stalk is formed by the delta and b chains.

Its subcellular location is the cell inner membrane. Functionally, key component of the proton channel; it plays a direct role in the translocation of protons across the membrane. This is ATP synthase subunit a 2 from Hahella chejuensis (strain KCTC 2396).